The chain runs to 282 residues: 5'-nucleotidase SurE (282 aa).

Positions 12, 13, 43, and 98 each coordinate a divalent metal cation.

The protein belongs to the SurE nucleotidase family. It depends on a divalent metal cation as a cofactor.

Its subcellular location is the cytoplasm. The enzyme catalyses a ribonucleoside 5'-phosphate + H2O = a ribonucleoside + phosphate. Nucleotidase that shows phosphatase activity on nucleoside 5'-monophosphates. This Hyperthermus butylicus (strain DSM 5456 / JCM 9403 / PLM1-5) protein is 5'-nucleotidase SurE.